Reading from the N-terminus, the 312-residue chain is Probable deoxyhypusine synthase (312 aa).

Lysine 285 (nucleophile) is an active-site residue.

It belongs to the deoxyhypusine synthase family. Requires NAD(+) as cofactor.

The enzyme catalyses [eIF5A protein]-L-lysine + spermidine = [eIF5A protein]-deoxyhypusine + propane-1,3-diamine. It participates in protein modification; eIF5A hypusination. In terms of biological role, catalyzes the NAD-dependent oxidative cleavage of spermidine and the subsequent transfer of the butylamine moiety of spermidine to the epsilon-amino group of a specific lysine residue of the eIF-5A precursor protein to form the intermediate deoxyhypusine residue. In Saccharolobus islandicus (strain Y.N.15.51 / Yellowstone #2) (Sulfolobus islandicus), this protein is Probable deoxyhypusine synthase.